The primary structure comprises 309 residues: ESX-3 secretion system protein EccE3 (309 aa).

Transmembrane regions (helical) follow at residues 5–25 and 29–49; these read IALASLFVVAAVLAQPWQTTT and VLGVSIAAVIVLLAWWKGMFL.

It belongs to the EccE family. As to quaternary structure, part of the ESX-3 / type VII secretion system (T7SS), which is composed of cytosolic and membrane components. The ESX-3 membrane complex is composed of EccB3, EccC3, EccD3 and EccE3.

Its subcellular location is the cell inner membrane. In terms of biological role, part of the ESX-3 specialized secretion system, which is required for siderophore-mediated iron acquisition and for the secretion of EsxH and EsxG. In Mycolicibacterium smegmatis (strain ATCC 700084 / mc(2)155) (Mycobacterium smegmatis), this protein is ESX-3 secretion system protein EccE3.